A 130-amino-acid chain; its full sequence is Small ribosomal subunit protein uS8 (130 aa).

The protein belongs to the universal ribosomal protein uS8 family. Part of the 30S ribosomal subunit.

Its function is as follows. One of the primary rRNA binding proteins, it binds directly to 16S rRNA central domain where it helps coordinate assembly of the platform of the 30S subunit. This Methanoregula boonei (strain DSM 21154 / JCM 14090 / 6A8) protein is Small ribosomal subunit protein uS8.